Reading from the N-terminus, the 687-residue chain is SLCO1B3-SLCO1B7 readthrough transcript protein (687 aa).

Topologically, residues 1–29 are cytoplasmic; sequence MDQHQHLNKTAESASSEKKKTRRCNGFKM. A helical membrane pass occupies residues 30–50; the sequence is FLAALSFSYIAKALGGIIMKI. Topologically, residues 51–63 are extracellular; the sequence is SITQIERRFDISS. A helical membrane pass occupies residues 64–84; that stretch reads SLAGLIDGSFEIGNLLVIVFV. Residues 85 to 96 are Cytoplasmic-facing; sequence SYFGSKLHRPKL. A helical transmembrane segment spans residues 97-117; sequence IGIGCLLMGTGSILTSLPHFF. Residues 118 to 170 are Extracellular-facing; sequence MGYYRYSKETNIDPSENSTSNLPNCLINQMLSLNRTPSEIIERGCVKESGSHM. 2 N-linked (GlcNAc...) asparagine glycosylation sites follow: N134 and N151. The chain crosses the membrane as a helical span at residues 171 to 191; that stretch reads WIYVFMGNMLRGIGETPIVPL. Residues 192-206 lie on the Cytoplasmic side of the membrane; the sequence is GISYIDDFAKEGHSS. The chain crosses the membrane as a helical span at residues 207 to 227; that stretch reads LYLGTVNVMGMTGLVFAFMLG. At 228-258 the chain is on the extracellular side; the sequence is SLFAKMYVDIGYVDLSTIRITPKDSRWVGAW. Residues 259-279 traverse the membrane as a helical segment; it reads WLGFLVSGIVSIISSIPFFFL. Over 280 to 339 the chain is Cytoplasmic; that stretch reads PLNPNKPQKERKVSLFLHVLKTNDKRNQIANLTNRRKYITKNVTGFFQSLKSILTNPLYV. The chain crosses the membrane as a helical span at residues 340-360; sequence IFVIFTLLHMSSYIASLTYII. Over 361-376 the chain is Extracellular; it reads KMVEQQYGWSASKTNF. A helical membrane pass occupies residues 377-397; sequence LLGVLALPAVAIGMFSGGYII. Over 398 to 409 the chain is Cytoplasmic; the sequence is KKFKLSLVGLAK. The helical transmembrane segment at 410–430 threads the bilayer; the sequence is LAFCSATVHLLSQVLYFFLIC. Over 431-539 the chain is Extracellular; the sequence is ESKSVAGLTL…CTRKSYVYFV (109 aa). A Kazal-like domain is found at 453-508; it reads DVPLSYCNSECNCDESQWEPVCGNNGITYLSPCLAGCKSSSGNKEPIVFYNCSCVE. Disulfide bonds link C459/C489, C465/C485, and C474/C506. Residues N503 and N516 are each glycosylated (N-linked (GlcNAc...) asparagine). Residues 540–560 form a helical membrane-spanning segment; the sequence is IQVLDAFLCAVGLTSYSVLVI. Topologically, residues 561–568 are cytoplasmic; that stretch reads RIVQPELK. The helical transmembrane segment at 569–589 threads the bilayer; sequence ALAIGFHSMIMRSLGGILVPI. At 590 to 624 the chain is on the extracellular side; sequence YFGALIDTTCMKWSTNSCGARGACRIYNSTYLGRA. N-linked (GlcNAc...) asparagine glycosylation is present at N617. The helical transmembrane segment at 625–645 threads the bilayer; the sequence is FFGLKVALIFPVLVLLTVFIF. Over 646–687 the chain is Cytoplasmic; the sequence is VVRKKSHGKDTKVLENERQVMDEANLEFLNDSEHFVPSAEEQ.

Belongs to the organo anion transporter (TC 2.A.60) family. Expressed in the perivenular areas (centrilobular) of the liver (at protein level).

It is found in the smooth endoplasmic reticulum membrane. It localises to the cell membrane. The protein resides in the endoplasmic reticulum membrane. It carries out the reaction 17beta-estradiol 17-O-(beta-D-glucuronate)(out) = 17beta-estradiol 17-O-(beta-D-glucuronate)(in). The enzyme catalyses dehydroepiandrosterone 3-sulfate(out) = dehydroepiandrosterone 3-sulfate(in). The catalysed reaction is taurocholate(out) = taurocholate(in). It catalyses the reaction lithocholate(out) = lithocholate(in). With respect to regulation, transport activity is induced by farnesoid X receptor (FXR) agonists such as chenodeoxycholate. Its function is as follows. Mediates the Na(+)-independent uptake of organic anions. Transports the conjugated steroids 17-beta-glucuronosyl estradiol (17beta-estradiol 17-O-(beta-D-glucuronate) or E2G) and dehydroepiandrosterone 3-sulfate (DHEAS) at the smooth endoplasmic reticulum membrane (SER), granting access to metabolizing enzymes. Contributes to the metabolism of bile acids such as taurocholate (cholyltaurine) and lithocholate, by functioning as a doorway between SER and cytosol, thereby decreasing their circulating levels and protecting the organism from their detergent properties. Regulates access or exit of drugs to the SER lumen. This Homo sapiens (Human) protein is SLCO1B3-SLCO1B7 readthrough transcript protein.